The following is a 666-amino-acid chain: Threonine--tRNA ligase (666 aa).

The 64-residue stretch at Met-1–Arg-64 folds into the TGS domain. Positions Asp-245–Pro-553 are catalytic. Zn(2+)-binding residues include Cys-347, His-398, and His-530.

It belongs to the class-II aminoacyl-tRNA synthetase family. As to quaternary structure, homodimer. The cofactor is Zn(2+).

Its subcellular location is the cytoplasm. The enzyme catalyses tRNA(Thr) + L-threonine + ATP = L-threonyl-tRNA(Thr) + AMP + diphosphate + H(+). Its function is as follows. Catalyzes the attachment of threonine to tRNA(Thr) in a two-step reaction: L-threonine is first activated by ATP to form Thr-AMP and then transferred to the acceptor end of tRNA(Thr). Also edits incorrectly charged L-seryl-tRNA(Thr). The sequence is that of Threonine--tRNA ligase from Allorhizobium ampelinum (strain ATCC BAA-846 / DSM 112012 / S4) (Agrobacterium vitis (strain S4)).